Here is a 507-residue protein sequence, read N- to C-terminus: tRNA-2-methylthio-N(6)-dimethylallyladenosine synthase (507 aa).

Residues 13–129 (RTYQVRTYGC…LPALLERARH (117 aa)) form the MTTase N-terminal domain. [4Fe-4S] cluster-binding residues include Cys-22, Cys-58, Cys-92, Cys-166, Cys-170, and Cys-173. The 237-residue stretch at 152 to 388 (RESAYAAWVS…IALQESVTLE (237 aa)) folds into the Radical SAM core domain. The region spanning 391–462 (QKQIGRMIEV…PHHLIADDGV (72 aa)) is the TRAM domain. Residues 459 to 478 (DDGVRSHRRTRAGDAHEAGK) are compositionally biased toward basic and acidic residues. The interval 459 to 492 (DDGVRSHRRTRAGDAHEAGKKPSTPGIGLGMPAI) is disordered.

Belongs to the methylthiotransferase family. MiaB subfamily. In terms of assembly, monomer. It depends on [4Fe-4S] cluster as a cofactor.

Its subcellular location is the cytoplasm. It carries out the reaction N(6)-dimethylallyladenosine(37) in tRNA + (sulfur carrier)-SH + AH2 + 2 S-adenosyl-L-methionine = 2-methylsulfanyl-N(6)-dimethylallyladenosine(37) in tRNA + (sulfur carrier)-H + 5'-deoxyadenosine + L-methionine + A + S-adenosyl-L-homocysteine + 2 H(+). In terms of biological role, catalyzes the methylthiolation of N6-(dimethylallyl)adenosine (i(6)A), leading to the formation of 2-methylthio-N6-(dimethylallyl)adenosine (ms(2)i(6)A) at position 37 in tRNAs that read codons beginning with uridine. This chain is tRNA-2-methylthio-N(6)-dimethylallyladenosine synthase, found in Mycobacteroides abscessus (strain ATCC 19977 / DSM 44196 / CCUG 20993 / CIP 104536 / JCM 13569 / NCTC 13031 / TMC 1543 / L948) (Mycobacterium abscessus).